The following is a 92-amino-acid chain: Defensin (92 aa).

A signal peptide spans Met1–Ala20. Positions Gln21 to Arg52 are excised as a propeptide. Disulfide bonds link Cys55/Cys82, Cys68/Cys88, and Cys72/Cys90.

It belongs to the invertebrate defensin family. Type 1 subfamily. In terms of tissue distribution, hemolymph (at protein level).

It localises to the secreted. Functionally, responsible for the anti Gram-positive activity of immune hemolymph. Expressed in the absence of immune challenge during metamorphosis. This Drosophila melanogaster (Fruit fly) protein is Defensin (Def).